A 432-amino-acid polypeptide reads, in one-letter code: Hexuronate transporter (432 aa).

The first 31 residues, 1–31 (MRKIKGLRWYMIALVTLGTVLGYLTRNTVAA), serve as a signal peptide directing secretion. Residues 33-48 (APTLMEELNISTQQYS) lie on the Periplasmic side of the membrane. A helical membrane pass occupies residues 49–69 (YIIAAYSAAYTVMQPVAGYVL). The Cytoplasmic segment spans residues 70–75 (DVLGTK). A helical membrane pass occupies residues 76–96 (IGYAMFAVLWAVFCGATALAG). At 97–99 (SWG) the chain is on the periplasmic side. A helical membrane pass occupies residues 100 to 120 (GLAVARGAVGAAEAAMIPAGL). The Cytoplasmic segment spans residues 121 to 138 (KASSEWFPAKERSIAVGY). A helical membrane pass occupies residues 139–159 (FNVGSSIGAMIAPPLVVWAIV). The Periplasmic portion of the chain corresponds to 160–164 (MHSWQ). A helical membrane pass occupies residues 165 to 185 (MAFIISGALSFIWAMAWLIFY). Over 186 to 236 (KHPRDQKHLTDEERDYIINGQEAQHQVSTAKKMSVGQILRNRQFWGIALPR) the chain is Cytoplasmic. Residues 237–257 (FLAEPAWGTFNAWIPLFMFKV) traverse the membrane as a helical segment. At 258 to 264 (YGFNLKE) the chain is on the periplasmic side. A helical transmembrane segment spans residues 265 to 285 (IAMFAWMPMLFADLGCILGGY). At 286-293 (LPPLFQRW) the chain is on the cytoplasmic side. The chain crosses the membrane as a helical span at residues 294–314 (FGVNLIVSRKMVVTLGAVLMI). Residues 315–317 (GPG) are Periplasmic-facing. A helical membrane pass occupies residues 318–338 (MIGLFTNPYVAIMLLCIGGFA). Over 339–369 (HQALSGALITLSSDVFGRNEVATANGLTGMS) the chain is Cytoplasmic. The helical transmembrane segment at 370–390 (AWLASTLFALVVGALADTIGF) threads the bilayer. Position 391 (Ser391) is a topological domain, periplasmic. The chain crosses the membrane as a helical span at residues 392–412 (PLFAVLAVFDLLGALVIWTVL). Topologically, residues 413-432 (QNKPAIEVAQETHNDPAPQH) are cytoplasmic.

It belongs to the major facilitator superfamily. Phthalate permease family.

It is found in the cell inner membrane. It carries out the reaction aldehydo-D-glucuronate(in) + H(+)(in) = aldehydo-D-glucuronate(out) + H(+)(out). It catalyses the reaction aldehydo-D-galacturonate(out) + H(+)(out) = aldehydo-D-galacturonate(in) + H(+)(in). Functionally, transport of aldohexuronates such as D-glucuronate and D-galacturonate. In Escherichia coli O157:H7, this protein is Hexuronate transporter (exuT).